The chain runs to 125 residues: Large ribosomal subunit protein eL32 (125 aa).

Belongs to the eukaryotic ribosomal protein eL32 family.

The chain is Large ribosomal subunit protein eL32 (rpl32e) from Sulfolobus acidocaldarius (strain ATCC 33909 / DSM 639 / JCM 8929 / NBRC 15157 / NCIMB 11770).